The sequence spans 403 residues: Palmitoyltransferase ZDHHC23-A (403 aa).

Over 1 to 70 (MKRERFKPPE…ADRLGVSCCT (70 aa)) the chain is Cytoplasmic. The chain crosses the membrane as a helical span at residues 71 to 91 (VGPLRLELSVLPPMVLIPGLL). Residue R92 is a topological domain, lumenal. A helical membrane pass occupies residues 93–113 (VAAINCLLGVIILTALPLLVL). The Cytoplasmic portion of the chain corresponds to 114-125 (WYYYMTHRRKRR). A helical membrane pass occupies residues 126 to 146 (TLFFLSLALFSLAYMYYLFLT). Residues 147-153 (EIVPRGD) are Lumenal-facing. Residues 154–174 (VTHLQVVTATTGMMLTLISLV) form a helical membrane-spanning segment. Topologically, residues 175-268 (RTKQGPGFVK…NSCVGQANHR (94 aa)) are cytoplasmic. A DHHC domain is found at 225–275 (KKCPVCQLVRPPRAGHCRICGACVLRMDHHCVWINSCVGQANHRQFILTLL). C255 serves as the catalytic S-palmitoyl cysteine intermediate. A helical membrane pass occupies residues 269–289 (QFILTLLLFLLTSFYGISLVL). Residues 290-319 (RSICPKQSLFTAMLYCPGVYNQYSTALCFT) are Lumenal-facing. The chain crosses the membrane as a helical span at residues 320 to 340 (CVWYSVIITGGLLHLFILQII). Over 341–403 (NVSCNVTERE…GSSLNLTDMV (63 aa)) the chain is Cytoplasmic.

Belongs to the DHHC palmitoyltransferase family.

The protein localises to the golgi apparatus membrane. Its subcellular location is the golgi apparatus. It is found in the trans-Golgi network membrane. The enzyme catalyses L-cysteinyl-[protein] + hexadecanoyl-CoA = S-hexadecanoyl-L-cysteinyl-[protein] + CoA. Palmitoyltransferase that could catalyze the addition of palmitate onto various protein substrates and be involved in a variety of cellular processes. This is Palmitoyltransferase ZDHHC23-A (zdhhc23a) from Danio rerio (Zebrafish).